The primary structure comprises 197 residues: Dephospho-CoA kinase (197 aa).

The DPCK domain occupies 3 to 197 (VLGLTGSIGL…IDELRGQRGS (195 aa)). An ATP-binding site is contributed by 11-16 (GLGKST).

Belongs to the CoaE family.

The protein resides in the cytoplasm. It carries out the reaction 3'-dephospho-CoA + ATP = ADP + CoA + H(+). It functions in the pathway cofactor biosynthesis; coenzyme A biosynthesis; CoA from (R)-pantothenate: step 5/5. Its function is as follows. Catalyzes the phosphorylation of the 3'-hydroxyl group of dephosphocoenzyme A to form coenzyme A. This chain is Dephospho-CoA kinase, found in Mesorhizobium japonicum (strain LMG 29417 / CECT 9101 / MAFF 303099) (Mesorhizobium loti (strain MAFF 303099)).